Reading from the N-terminus, the 526-residue chain is Peptide chain release factor 3 (526 aa).

Residues 9-277 (DKRRTFAIIS…GIVEWAPKPL (269 aa)) enclose the tr-type G domain. Residues 18-25 (SHPDAGKT), 86-90 (DTPGH), and 140-143 (NKCD) contribute to the GTP site.

This sequence belongs to the TRAFAC class translation factor GTPase superfamily. Classic translation factor GTPase family. PrfC subfamily.

The protein localises to the cytoplasm. In terms of biological role, increases the formation of ribosomal termination complexes and stimulates activities of RF-1 and RF-2. It binds guanine nucleotides and has strong preference for UGA stop codons. It may interact directly with the ribosome. The stimulation of RF-1 and RF-2 is significantly reduced by GTP and GDP, but not by GMP. The polypeptide is Peptide chain release factor 3 (Shewanella frigidimarina (strain NCIMB 400)).